We begin with the raw amino-acid sequence, 203 residues long: ATP-dependent Clp protease proteolytic subunit (203 aa).

S107 acts as the Nucleophile in catalysis. The active site involves H132.

It belongs to the peptidase S14 family. Fourteen ClpP subunits assemble into 2 heptameric rings which stack back to back to give a disk-like structure with a central cavity, resembling the structure of eukaryotic proteasomes.

The protein localises to the cytoplasm. The catalysed reaction is Hydrolysis of proteins to small peptides in the presence of ATP and magnesium. alpha-casein is the usual test substrate. In the absence of ATP, only oligopeptides shorter than five residues are hydrolyzed (such as succinyl-Leu-Tyr-|-NHMec, and Leu-Tyr-Leu-|-Tyr-Trp, in which cleavage of the -Tyr-|-Leu- and -Tyr-|-Trp bonds also occurs).. Its function is as follows. Cleaves peptides in various proteins in a process that requires ATP hydrolysis. Has a chymotrypsin-like activity. Plays a major role in the degradation of misfolded proteins. The chain is ATP-dependent Clp protease proteolytic subunit from Shewanella pealeana (strain ATCC 700345 / ANG-SQ1).